A 375-amino-acid polypeptide reads, in one-letter code: 23S rRNA (uracil(747)-C(5))-methyltransferase RlmC (375 aa).

4 residues coordinate [4Fe-4S] cluster: Cys-3, Cys-11, Cys-14, and Cys-87. The S-adenosyl-L-methionine site is built by Gln-212, Phe-241, Glu-262, and Asn-307. Cys-334 acts as the Nucleophile in catalysis.

It belongs to the class I-like SAM-binding methyltransferase superfamily. RNA M5U methyltransferase family. RlmC subfamily.

The enzyme catalyses uridine(747) in 23S rRNA + S-adenosyl-L-methionine = 5-methyluridine(747) in 23S rRNA + S-adenosyl-L-homocysteine + H(+). Functionally, catalyzes the formation of 5-methyl-uridine at position 747 (m5U747) in 23S rRNA. This chain is 23S rRNA (uracil(747)-C(5))-methyltransferase RlmC, found in Shigella sonnei (strain Ss046).